A 371-amino-acid chain; its full sequence is Putative glutamate--cysteine ligase 2 (371 aa).

This sequence belongs to the glutamate--cysteine ligase type 2 family. YbdK subfamily.

The enzyme catalyses L-cysteine + L-glutamate + ATP = gamma-L-glutamyl-L-cysteine + ADP + phosphate + H(+). Functionally, ATP-dependent carboxylate-amine ligase which exhibits weak glutamate--cysteine ligase activity. This is Putative glutamate--cysteine ligase 2 from Cupriavidus taiwanensis (strain DSM 17343 / BCRC 17206 / CCUG 44338 / CIP 107171 / LMG 19424 / R1) (Ralstonia taiwanensis (strain LMG 19424)).